The sequence spans 321 residues: uncharacterized protein (321 aa).

The active-site Proton donor is Y60. Residue H118 participates in substrate binding.

This sequence belongs to the aldo/keto reductase family.

This is an uncharacterized protein from Schizosaccharomyces pombe (strain 972 / ATCC 24843) (Fission yeast).